A 378-amino-acid chain; its full sequence is Zinc finger protein DPF3 (378 aa).

Residue Lys99 forms a Glycyl lysine isopeptide (Lys-Gly) (interchain with G-Cter in SUMO2) linkage. Positions 146 to 193 (LENDENVEEGNEEEDLEEDVPKRKNRTRGRARGSAGGRRRHDAASQED) are disordered. Residues 148-163 (NDENVEEGNEEEDLEE) show a composition bias toward acidic residues. A compositionally biased stretch (basic residues) spans 168-186 (RKNRTRGRARGSAGGRRRH). Residues 198–221 (YVCDICGKRYKNRPGLSYHYAHTH) form a C2H2-type zinc finger. Positions 225-254 (EEGDEAQDQETRSPPNHRNENHRPQKGPDG) are disordered. 2 consecutive PHD-type zinc fingers follow at residues 259-319 (NNYC…CKSC) and 316-366 (CKSC…CWEL). The interaction with HDGFL2 stretch occupies residues 317–332 (KSCILCGTSENDDQLL). Gly323 is modified (phosphoserine).

This sequence belongs to the requiem/DPF family. In terms of assembly, component of the BAF complex, which includes at least actin (ACTB), ARID1A, ARID1B/BAF250, SMARCA2, SMARCA4/BRG1/BAF190A, ACTL6A/BAF53, ACTL6B/BAF53B, SMARCE1/BAF57, SMARCC1/BAF155, SMARCC2/BAF170, SMARCB1/SNF5/INI1, and one or more of SMARCD1/BAF60A, SMARCD2/BAF60B, or SMARCD3/BAF60C. In muscle cells, the BAF complex also contains DPF3. Interacts with acetylated histones H3 and H4. Component of neuron-specific chromatin remodeling complex (nBAF complex) composed of at least, ARID1A/BAF250A or ARID1B/BAF250B, SMARCD1/BAF60A, SMARCD3/BAF60C, SMARCA2/BRM/BAF190B, SMARCA4/BRG1/BAF190A, SMARCB1/BAF47, SMARCC1/BAF155, SMARCE1/BAF57, SMARCC2/BAF170, DPF1/BAF45B, DPF3/BAF45C, ACTL6B/BAF53B and actin. As to quaternary structure, interacts with HDGFL2. Interacts with SMARCA4/BRG1/BAF190A, SMARCC1/BAF155 and SMARCD1/BAF60A. As to expression, expressed in the heart and somites. Expressed in cerebellum and spinal cord, but not in cerebral cortex. Expressed specifically in post-mitotic neurons (at protein level).

The protein resides in the nucleus. In terms of biological role, muscle-specific component of the BAF complex, a multiprotein complex involved in transcriptional activation and repression of select genes by chromatin remodeling (alteration of DNA-nucleosome topology). Specifically binds acetylated lysines on histone 3 and 4 (H3K14ac, H3K9ac, H4K5ac, H4K8ac, H4K12ac, H4K16ac). In the complex, it acts as a tissue-specific anchor between histone acetylations and methylations and chromatin remodeling. It thereby probably plays an essential role in heart and skeletal muscle development. Belongs to the neuron-specific chromatin remodeling complex (nBAF complex). During neural development a switch from a stem/progenitor to a post-mitotic chromatin remodeling mechanism occurs as neurons exit the cell cycle and become committed to their adult state. The transition from proliferating neural stem/progenitor cells to post-mitotic neurons requires a switch in subunit composition of the npBAF and nBAF complexes. As neural progenitors exit mitosis and differentiate into neurons, npBAF complexes which contain ACTL6A/BAF53A and PHF10/BAF45A, are exchanged for homologous alternative ACTL6B/BAF53B and DPF1/BAF45B or DPF3/BAF45C subunits in neuron-specific complexes (nBAF). The npBAF complex is essential for the self-renewal/proliferative capacity of the multipotent neural stem cells. The nBAF complex along with CREST plays a role regulating the activity of genes essential for dendrite growth. Acts as a regulator of myogenesis in cooperation with HDGFL2. Mediates the interaction of HDGFL2 with the BAF complex. HDGFL2-DPF3a activate myogenic genes by increasing chromatin accessibility through recruitment of SMARCA4/BRG1/BAF190A (ATPase subunit of the BAF complex) to myogenic gene promoters. The polypeptide is Zinc finger protein DPF3 (Dpf3) (Mus musculus (Mouse)).